The sequence spans 214 residues: Large ribosomal subunit protein uL1 (214 aa).

It belongs to the universal ribosomal protein uL1 family. As to quaternary structure, part of the 50S ribosomal subunit.

Its function is as follows. Binds directly to 23S rRNA. Probably involved in E site tRNA release. In terms of biological role, protein L1 is also a translational repressor protein, it controls the translation of its operon by binding to its mRNA. This chain is Large ribosomal subunit protein uL1, found in Methanoregula boonei (strain DSM 21154 / JCM 14090 / 6A8).